We begin with the raw amino-acid sequence, 208 residues long: Small ribosomal subunit protein uS2 (208 aa).

This sequence belongs to the universal ribosomal protein uS2 family.

This Cenarchaeum symbiosum (strain A) protein is Small ribosomal subunit protein uS2.